We begin with the raw amino-acid sequence, 310 residues long: Zinc finger protein-like 1 (310 aa).

The B box-type; degenerate zinc-finger motif lies at 1 to 43; that stretch reads MGLCKCPKRKVTNLFCFEHRVNVCEHCLVANHAKCIVQSYLQW. The Cytoplasmic portion of the chain corresponds to 1 to 266; it reads MGLCKCPKRK…RPLTLLQRAG (266 aa). Residues 53–101 form an RING-type; degenerate zinc finger; the sequence is CRLCNIPLASRETTRLVCYDLFHWACLNERAAQLPRNTAPAGYQCPSCN. The interval 145–231 is disordered; it reads PEPLNTSDFS…RTPGLHGDCD (87 aa). The span at 148–165 shows a compositional bias: polar residues; it reads LNTSDFSDWSSFNASSTP. Residues 213 to 224 are compositionally biased toward basic and acidic residues; sequence KVYDTRDDDRTP. Residues 267–287 form a helical membrane-spanning segment; sequence LLLLLGLLGFLALLALMSRLG. At 288–310 the chain is on the lumenal side; it reads RAAADSDPNLDPLMNPHIRVGPS.

The protein belongs to the ZFPL1 family. Interacts with GOLGA2/GM130. In terms of processing, phosphorylated. As to expression, expressed strongly in the exocrine pancreas.

The protein resides in the golgi apparatus. Its subcellular location is the cis-Golgi network membrane. In terms of biological role, required for cis-Golgi integrity and efficient ER to Golgi transport. Involved in the maintenance of the integrity of the cis-Golgi, possibly via its interaction with GOLGA2/GM130. This chain is Zinc finger protein-like 1 (ZFPL1), found in Homo sapiens (Human).